The chain runs to 198 residues: Transcription factor elt-7 (198 aa).

A compositionally biased stretch (polar residues) spans 1 to 18 (MLPETTTLQPLPSVTTIM). Residues 1–20 (MLPETTTLQPLPSVTTIMNE) form a disordered region. A GATA-type zinc finger spans residues 143-167 (CSHCSTTTTTLWRKNDEGNLECNAC).

Its subcellular location is the nucleus. Functionally, transcriptional activator that binds to the consensus sequence 5'-[AT]GATA[AG]-3'. Required for gut-specific differentiation, specifically acting with the GATA region-binding transcription factor elt-2 to control normal gene expression and promote normal formation of the intestine. May have a protective role in response to infection by Gram-negative bacteria such as P.aeruginosa. In Caenorhabditis elegans, this protein is Transcription factor elt-7.